Here is a 373-residue protein sequence, read N- to C-terminus: DNA replication and repair protein RecF (373 aa).

30 to 37 (GDNAQGKT) lines the ATP pocket.

Belongs to the RecF family.

The protein localises to the cytoplasm. Its function is as follows. The RecF protein is involved in DNA metabolism; it is required for DNA replication and normal SOS inducibility. RecF binds preferentially to single-stranded, linear DNA. It also seems to bind ATP. This is DNA replication and repair protein RecF from Oenococcus oeni (strain ATCC BAA-331 / PSU-1).